Here is a 181-residue protein sequence, read N- to C-terminus: Inner membrane-spanning protein YciB (181 aa).

The next 5 membrane-spanning stretches (helical) occupy residues 10 to 30 (LVIF…GALI), 50 to 70 (MHLI…ILHD), 80 to 100 (IVYA…KPIL), 118 to 138 (VTWY…YVAF), and 148 to 168 (FKVF…VFYL).

The protein belongs to the YciB family.

The protein resides in the cell inner membrane. Plays a role in cell envelope biogenesis, maintenance of cell envelope integrity and membrane homeostasis. The polypeptide is Inner membrane-spanning protein YciB (Shewanella piezotolerans (strain WP3 / JCM 13877)).